The following is a 684-amino-acid chain: MSEGEVQVIELINNFFLKSALLLEQSKVAHNFDTEEALRDGNHLFNIETRGDPLLEAQIQPWITFDGVKTMPPLVIETYLDLRALQPNHMVYLHDADGNPWMVCKGGKKTEIVLERWLVELDKQTIDDSIDSNDPENLHKQLVLLFRYLYTLTQLLPANDIITKPHNSQQPALINVQTRLLDGSKPILSKGRVGLSKPIIASYSNTMNETNIASHLEQRKITPIKTTFGSLRITVSYRKDVDFYVIDSDDLQKRYMTPSLSNETTTVPDRRASSNCSRSMSVSPKTNTINATLFPLEGSSARRQSISSKLQPFKVGSVGSGSFVQSGSAQSTTSLVPSLSRNVSSSSVVAALKVQRGSAGSTIVNGDVPPELSSVGSGSKYSSSFGRIRRHSSIRRSESFDRTAKPRKSTENPPEDLLEFVKLLEDKKELNMKPNTILPQQDISNSLMRFQSMKSNNDALSDNLSMSMSIDQPNVRFGSNSHSPIPSFSPNYGSIPSRLSQGSRNNSNAELITSRKSSLDRHKHNLLSRTGSNVDINRRGSVGTMETTNEDSKEDEQSHMKGMHFSNEATINKDDDEDEMLMKRSFNAGTSTTEQVMGSPRSIRSISVSSYPRNQLPLKHLNLSHPTTSATTTHAKFHKSEMSPDPLHTEGAQPHTSSQHHNSSQKNDEDDDLLFVMSDMNLTN.

Disordered stretches follow at residues 260-284 (LSNE…SVSP), 394-414 (IRRS…ENPP), 491-520 (NYGS…SSLD), 532-559 (SNVD…EQSH), and 623-684 (LSHP…NLTN). Residues 395 to 410 (RRSESFDRTAKPRKST) are compositionally biased toward basic and acidic residues. Residues 491–516 (NYGSIPSRLSQGSRNNSNAELITSRK) are compositionally biased toward polar residues. The span at 624–634 (SHPTTSATTTH) shows a compositional bias: low complexity. The segment covering 654–665 (PHTSSQHHNSSQ) has biased composition (polar residues).

This sequence belongs to the ATG13 family. Fungi subfamily. Interacts with ATG1 to form the ATG1-ATG13 kinase complex.

The protein localises to the cytoplasm. It localises to the preautophagosomal structure. In terms of biological role, activates the ATG1 kinase in a nutritional condition dependent manner through the TOR pathway, leading to autophagy. Also involved in cytoplasm to vacuole transport (Cvt) and more specifically in Cvt vesicle formation. Seems to play a role in the switching machinery regulating the conversion between the Cvt pathway and autophagy. Finally, ATG13 is also required for glycogen storage during stationary phase. This is Autophagy-related protein 13 (ATG13) from Kluyveromyces lactis (strain ATCC 8585 / CBS 2359 / DSM 70799 / NBRC 1267 / NRRL Y-1140 / WM37) (Yeast).